Reading from the N-terminus, the 278-residue chain is 4-deoxy-L-threo-5-hexosulose-uronate ketol-isomerase (278 aa).

Residues histidine 196, histidine 198, glutamate 203, and histidine 245 each coordinate Zn(2+).

Belongs to the KduI family. As to quaternary structure, homohexamer. Zn(2+) is required as a cofactor.

It carries out the reaction 5-dehydro-4-deoxy-D-glucuronate = 3-deoxy-D-glycero-2,5-hexodiulosonate. It functions in the pathway glycan metabolism; pectin degradation; 2-dehydro-3-deoxy-D-gluconate from pectin: step 4/5. In terms of biological role, catalyzes the isomerization of 5-dehydro-4-deoxy-D-glucuronate to 3-deoxy-D-glycero-2,5-hexodiulosonate. The polypeptide is 4-deoxy-L-threo-5-hexosulose-uronate ketol-isomerase (Escherichia coli (strain SMS-3-5 / SECEC)).